We begin with the raw amino-acid sequence, 378 residues long: Erythronate-4-phosphate dehydrogenase (378 aa).

Substrate is bound by residues Ser-45 and Thr-66. NAD(+) is bound by residues Asp-146 and Thr-175. Residue Arg-208 is part of the active site. Asp-232 is an NAD(+) binding site. Glu-237 is a catalytic residue. Residue His-254 is the Proton donor of the active site. Gly-257 contributes to the NAD(+) binding site. Tyr-258 contacts substrate.

This sequence belongs to the D-isomer specific 2-hydroxyacid dehydrogenase family. PdxB subfamily. In terms of assembly, homodimer.

Its subcellular location is the cytoplasm. The enzyme catalyses 4-phospho-D-erythronate + NAD(+) = (R)-3-hydroxy-2-oxo-4-phosphooxybutanoate + NADH + H(+). The protein operates within cofactor biosynthesis; pyridoxine 5'-phosphate biosynthesis; pyridoxine 5'-phosphate from D-erythrose 4-phosphate: step 2/5. Catalyzes the oxidation of erythronate-4-phosphate to 3-hydroxy-2-oxo-4-phosphonooxybutanoate. The protein is Erythronate-4-phosphate dehydrogenase of Enterobacter sp. (strain 638).